We begin with the raw amino-acid sequence, 769 residues long: Metal transporter CNNM4 (769 aa).

The Extracellular portion of the chain corresponds to 1–175; sequence MAASAGCYYG…RLRVLEEEKP (175 aa). 2 N-linked (GlcNAc...) asparagine glycosylation sites follow: asparagine 99 and asparagine 115. The CNNM transmembrane domain occupies 175 to 355; that stretch reads PLLPIWLQAC…EPYSGIVREE (181 aa). The chain crosses the membrane as a helical span at residues 176-196; that stretch reads LLPIWLQACIIAVLLTLSGIF. At 197-237 the chain is on the cytoplasmic side; it reads SGLNLGLMALDPMELRVVQRCGTEKEKRYASKIEPVRRKGN. The segment at residues 238-258 is an intramembrane region (helical); the sequence is YLLCSLLLGNVLVNTTLTALL. The Cytoplasmic portion of the chain corresponds to 259–261; it reads DEL. Residues 262-282 traverse the membrane as a helical segment; that stretch reads IGSGLAAVLASTTGIVVLGEI. The Extracellular portion of the chain corresponds to 283–292; the sequence is VPQALCSRHG. The helical transmembrane segment at 293–313 threads the bilayer; the sequence is LAVGANTLWLTRIFMLLTFPV. The Cytoplasmic segment spans residues 314–769; the sequence is AYPVSRLLDC…SQHSLQHNAV (456 aa). 2 CBS domains span residues 374–435 and 442–508; these read MTKV…CTPL and YSHP…ILDE. Residues 717–769 form a disordered region; it reads LMSSRLDSSPQSPEGGTRKPDSTLSERSEVLEDETTSLLNQRNSQHSLQHNAV. Residues 721-730 show a composition bias toward polar residues; the sequence is RLDSSPQSPE. Residues 732–746 are compositionally biased toward basic and acidic residues; sequence GTRKPDSTLSERSEV. Positions 752–769 are enriched in polar residues; that stretch reads TSLLNQRNSQHSLQHNAV.

It belongs to the ACDP family.

It is found in the cell membrane. Its function is as follows. Probable metal transporter. This Xenopus tropicalis (Western clawed frog) protein is Metal transporter CNNM4 (cnnm4).